A 185-amino-acid polypeptide reads, in one-letter code: Translocon-associated protein subunit gamma (185 aa).

At M1 the chain carries N-acetylmethionine. The Lumenal segment spans residues 1 to 27 (MAPKGGPKQQSEEDLLLQDFSRNLSAK). S11 bears the Phosphoserine mark. A helical transmembrane segment spans residues 28 to 48 (SSALFFGNAFIVSAIPIWLYW). Residues 49–54 (RIWHMD) are Cytoplasmic-facing. Residues 55 to 76 (LIQSAVLYSVMTLVSTYLVAFA) form a helical membrane-spanning segment. Residues 77-135 (YKNVKFVLKHKVAQKREDAVSKEVTRKLSEADNRKMSRKEKDERILWKKNEVADYEATT) lie on the Lumenal side of the membrane. Position 105 is a phosphoserine (S105). The chain crosses the membrane as a helical span at residues 136–157 (FSIFYNNTLFLVLVIVASFFIL). Residues 158–163 (KNFNPT) lie on the Cytoplasmic side of the membrane. A helical membrane pass occupies residues 164-184 (VNYILSISASSGLIALLSTGS).

It belongs to the TRAP-gamma family. As to quaternary structure, heterotetramer of TRAP-alpha, TRAP-beta, TRAP-delta and TRAP-gamma.

The protein localises to the endoplasmic reticulum membrane. Its function is as follows. TRAP proteins are part of a complex whose function is to bind calcium to the ER membrane and thereby regulate the retention of ER resident proteins. In Bos taurus (Bovine), this protein is Translocon-associated protein subunit gamma (SSR3).